Here is a 372-residue protein sequence, read N- to C-terminus: Glutamate 5-kinase (372 aa).

ATP is bound at residue Lys14. Positions 54, 141, and 153 each coordinate substrate. 173–174 serves as a coordination point for ATP; that stretch reads TD. In terms of domain architecture, PUA spans 280-358; that stretch reads RGHVVIDAGA…GEIETVLGYM (79 aa).

Belongs to the glutamate 5-kinase family.

It localises to the cytoplasm. It carries out the reaction L-glutamate + ATP = L-glutamyl 5-phosphate + ADP. It participates in amino-acid biosynthesis; L-proline biosynthesis; L-glutamate 5-semialdehyde from L-glutamate: step 1/2. In terms of biological role, catalyzes the transfer of a phosphate group to glutamate to form L-glutamate 5-phosphate. This Burkholderia ambifaria (strain ATCC BAA-244 / DSM 16087 / CCUG 44356 / LMG 19182 / AMMD) (Burkholderia cepacia (strain AMMD)) protein is Glutamate 5-kinase.